The sequence spans 242 residues: DNA repair protein RecO (242 aa).

Belongs to the RecO family. As to quaternary structure, monomer.

Functionally, involved in DNA repair and RecF pathway recombination. The polypeptide is DNA repair protein RecO (Salmonella enteritidis PT4 (strain P125109)).